The primary structure comprises 100 residues: UPF0125 protein CV_3462 (100 aa).

The protein belongs to the UPF0125 (RnfH) family.

This chain is UPF0125 protein CV_3462, found in Chromobacterium violaceum (strain ATCC 12472 / DSM 30191 / JCM 1249 / CCUG 213 / NBRC 12614 / NCIMB 9131 / NCTC 9757 / MK).